We begin with the raw amino-acid sequence, 345 residues long: Dimethyladenosine transferase 1, mitochondrial (345 aa).

Residues 1 to 27 constitute a mitochondrion transit peptide; it reads MAAPGKLSTCRLPPLPTIREIIKLFRL. S-adenosyl-L-methionine-binding residues include leucine 38, glycine 63, glutamate 85, lysine 86, aspartate 111, valine 112, and asparagine 141.

Belongs to the class I-like SAM-binding methyltransferase superfamily. rRNA adenine N(6)-methyltransferase family. KsgA subfamily. As to quaternary structure, interacts with mitochondrial RNA polymerase POLRMT. Interacts with TFAM. Bound to the maturing mtSSU until the late stages of assembly.

The protein localises to the mitochondrion. It carries out the reaction adenosine(N)/adenosine(N+1) in rRNA + 4 S-adenosyl-L-methionine = N(6)-dimethyladenosine(N)/N(6)-dimethyladenosine(N+1) in rRNA + 4 S-adenosyl-L-homocysteine + 4 H(+). In terms of biological role, mitochondrial methyltransferase which uses S-adenosyl methionine to dimethylate two highly conserved adjacent adenosine residues (A1583 and A1584) within the loop of helix 45 at the 3-prime end of 12S rRNA, thereby regulating the assembly or stability of the small subunit of the mitochondrial ribosome. Also required for basal transcription of mitochondrial DNA, probably via its interaction with POLRMT and TFAM. Stimulates transcription independently of the methyltransferase activity. The polypeptide is Dimethyladenosine transferase 1, mitochondrial (TFB1M) (Macaca fascicularis (Crab-eating macaque)).